Reading from the N-terminus, the 234-residue chain is Large ribosomal subunit protein uL1 (234 aa).

Belongs to the universal ribosomal protein uL1 family. Part of the 50S ribosomal subunit.

Its function is as follows. Binds directly to 23S rRNA. The L1 stalk is quite mobile in the ribosome, and is involved in E site tRNA release. In terms of biological role, protein L1 is also a translational repressor protein, it controls the translation of the L11 operon by binding to its mRNA. The polypeptide is Large ribosomal subunit protein uL1 (Anaeromyxobacter dehalogenans (strain 2CP-C)).